Reading from the N-terminus, the 548-residue chain is Druantia protein DruB (548 aa).

It localises to the cytoplasm. Its function is as follows. Component of antiviral defense system Druantia type I, composed of DruA, DruB, DruC, DruD and DruE. Expression of Druantia in E.coli (strain MG1655) confers resistance to phage lambda, SECphi18, SECphi27 and T4. The sequence is that of Druantia protein DruB from Escherichia coli (strain UMEA 4076-1).